A 548-amino-acid polypeptide reads, in one-letter code: Membrane protein insertase YidC (548 aa).

The chain crosses the membrane as a helical span at residues 6 to 26; the sequence is NLLVIALLFVSFMIWQAWEQD. A disordered region spans residues 28 to 55; sequence NPQPQAQQTTQTTTTAAGSAADQGVPAS. The segment covering 30-50 has biased composition (low complexity); sequence QPQAQQTTQTTTTAAGSAADQ. Transmembrane regions (helical) follow at residues 350-370, 420-440, 458-478, and 499-519; these read FVGN…GIMY, LGGC…YYML, LSAQ…MFFI, and PVIF…YYIV.

The protein belongs to the OXA1/ALB3/YidC family. Type 1 subfamily. Interacts with the Sec translocase complex via SecD. Specifically interacts with transmembrane segments of nascent integral membrane proteins during membrane integration.

The protein localises to the cell inner membrane. Functionally, required for the insertion and/or proper folding and/or complex formation of integral membrane proteins into the membrane. Involved in integration of membrane proteins that insert both dependently and independently of the Sec translocase complex, as well as at least some lipoproteins. Aids folding of multispanning membrane proteins. The sequence is that of Membrane protein insertase YidC from Escherichia coli O139:H28 (strain E24377A / ETEC).